A 127-amino-acid polypeptide reads, in one-letter code: Large ribosomal subunit protein bL17 (127 aa).

Belongs to the bacterial ribosomal protein bL17 family. Part of the 50S ribosomal subunit. Contacts protein L32.

This chain is Large ribosomal subunit protein bL17, found in Pediococcus pentosaceus (strain ATCC 25745 / CCUG 21536 / LMG 10740 / 183-1w).